The sequence spans 225 residues: Receptor-transporting protein 2 (225 aa).

The Cytoplasmic portion of the chain corresponds to 1–196; it reads MCTSLTTCEW…RAQAGSGYNF (196 aa). A 3CxxC-type zinc finger spans residues 52-161; it reads ASGRFHCSWC…AEFCEACQEG (110 aa). Residues 197-219 form a helical membrane-spanning segment; sequence LSLRWCLFWASLCLLVVYLQFSF. The Extracellular portion of the chain corresponds to 220-225; the sequence is LSPAFF.

This sequence belongs to the TMEM7 family. As to quaternary structure, interacts with olfactory receptors. In terms of tissue distribution, expressed in circumvallate papillae and testis.

The protein resides in the cell membrane. Functionally, specifically promotes functional cell surface expression of olfactory receptors, but not of other GPCRs. The protein is Receptor-transporting protein 2 (RTP2) of Homo sapiens (Human).